Consider the following 191-residue polypeptide: Probable DNA-directed RNA polymerase subunit delta (191 aa).

The HTH HARE-type domain maps to 14-83 (LSMIEVARAI…GENKWGLRSW (70 aa)). Composition is skewed to acidic residues over residues 117-136 (GDEDAIDYNDDDPEDEDFTE) and 142-191 (EYDE…EEEV). The interval 117-191 (GDEDAIDYND…DEEEEEEEEV (75 aa)) is disordered.

It belongs to the RpoE family. As to quaternary structure, RNAP is composed of a core of 2 alpha, a beta and a beta' subunits. The core is associated with a delta subunit and one of several sigma factors.

In terms of biological role, participates in both the initiation and recycling phases of transcription. In the presence of the delta subunit, RNAP displays an increased specificity of transcription, a decreased affinity for nucleic acids, and an increased efficiency of RNA synthesis because of enhanced recycling. The sequence is that of Probable DNA-directed RNA polymerase subunit delta from Streptococcus agalactiae serotype Ia (strain ATCC 27591 / A909 / CDC SS700).